The sequence spans 407 residues: Imidazolonepropionase (407 aa).

Positions 72 and 74 each coordinate Fe(3+). Zn(2+) is bound by residues H72 and H74. Positions 81, 144, and 177 each coordinate 4-imidazolone-5-propanoate. Residue Y144 participates in N-formimidoyl-L-glutamate binding. H242 provides a ligand contact to Fe(3+). H242 lines the Zn(2+) pocket. Q245 contacts 4-imidazolone-5-propanoate. D317 serves as a coordination point for Fe(3+). D317 contacts Zn(2+). N-formimidoyl-L-glutamate is bound by residues N319 and G321. T322 is a binding site for 4-imidazolone-5-propanoate.

It belongs to the metallo-dependent hydrolases superfamily. HutI family. It depends on Zn(2+) as a cofactor. Fe(3+) serves as cofactor.

Its subcellular location is the cytoplasm. The enzyme catalyses 4-imidazolone-5-propanoate + H2O = N-formimidoyl-L-glutamate. The protein operates within amino-acid degradation; L-histidine degradation into L-glutamate; N-formimidoyl-L-glutamate from L-histidine: step 3/3. Catalyzes the hydrolytic cleavage of the carbon-nitrogen bond in imidazolone-5-propanoate to yield N-formimidoyl-L-glutamate. It is the third step in the universal histidine degradation pathway. This chain is Imidazolonepropionase, found in Rhizobium rhizogenes (Agrobacterium rhizogenes).